Consider the following 271-residue polypeptide: Phosphate import ATP-binding protein PstB 2 (271 aa).

The segment at 1–20 (MLTKKPEINTILQTTPDPHS) is disordered. One can recognise an ABC transporter domain in the interval 25–266 (MATEDLHVYY…PQEKQTEDYI (242 aa)). 57–64 (GPSGCGKS) contributes to the ATP binding site.

It belongs to the ABC transporter superfamily. Phosphate importer (TC 3.A.1.7) family. As to quaternary structure, the complex is composed of two ATP-binding proteins (PstB), two transmembrane proteins (PstC and PstA) and a solute-binding protein (PstS).

Its subcellular location is the cell membrane. It carries out the reaction phosphate(out) + ATP + H2O = ADP + 2 phosphate(in) + H(+). In terms of biological role, part of the ABC transporter complex PstSACB involved in phosphate import. Responsible for energy coupling to the transport system. The protein is Phosphate import ATP-binding protein PstB 2 of Listeria innocua serovar 6a (strain ATCC BAA-680 / CLIP 11262).